The chain runs to 2392 residues: Protein Ycf2 (2392 aa).

Gly1658–Ser1665 contacts ATP.

This sequence belongs to the Ycf2 family.

The protein localises to the plastid. It is found in the chloroplast stroma. Its function is as follows. Probable ATPase of unknown function. Its presence in a non-photosynthetic plant (Epifagus virginiana) and experiments in tobacco indicate that it has an essential function which is probably not related to photosynthesis. The polypeptide is Protein Ycf2 (Anthoceros angustus (Hornwort)).